Reading from the N-terminus, the 565-residue chain is Alkaline nuclease (565 aa).

Belongs to the herpesviridae alkaline nuclease family. In terms of assembly, interacts with major DNA-binding protein; this interaction increases the nuclease processivity of the alkaline exonuclease.

It localises to the host nucleus. Its subcellular location is the host cytoplasm. Functionally, plays a role in processing non linear or branched viral DNA intermediates in order to promote the production of mature packaged unit-length linear progeny viral DNA molecules. Exhibits endonuclease and exonuclease activities and accepts both double-stranded and single-stranded DNA as substrate. Exonuclease digestion of DNA is in the 5'-&gt; 3' direction and the products are 5'-monophosphate nucleosides. Additionally, forms a recombinase with the major DNA-binding protein, which displays strand exchange activity. This is Alkaline nuclease from Equine herpesvirus 1 (strain V592) (EHV-1).